The primary structure comprises 143 residues: Probable FAD-linked sulfhydryl oxidase R368 (143 aa).

One can recognise an ERV/ALR sulfhydryl oxidase domain in the interval 10 to 104 (GWTFSHAVAL…YPEAIEAIEK (95 aa)). The cysteines at positions 46 and 49 are disulfide-linked. A helical membrane pass occupies residues 117-137 (FFIILIIIGIIVIIYLMYIVF).

The cofactor is FAD.

The protein localises to the membrane. It carries out the reaction 2 R'C(R)SH + O2 = R'C(R)S-S(R)CR' + H2O2. Its function is as follows. FAD-dependent sulfhydryl oxidase that catalyzes disulfide bond formation. The protein is Probable FAD-linked sulfhydryl oxidase R368 of Acanthamoeba polyphaga mimivirus (APMV).